We begin with the raw amino-acid sequence, 466 residues long: 3-isopropylmalate dehydratase large subunit (466 aa).

[4Fe-4S] cluster contacts are provided by Cys346, Cys406, and Cys409.

This sequence belongs to the aconitase/IPM isomerase family. LeuC type 1 subfamily. As to quaternary structure, heterodimer of LeuC and LeuD. [4Fe-4S] cluster is required as a cofactor.

It carries out the reaction (2R,3S)-3-isopropylmalate = (2S)-2-isopropylmalate. It functions in the pathway amino-acid biosynthesis; L-leucine biosynthesis; L-leucine from 3-methyl-2-oxobutanoate: step 2/4. Functionally, catalyzes the isomerization between 2-isopropylmalate and 3-isopropylmalate, via the formation of 2-isopropylmaleate. The chain is 3-isopropylmalate dehydratase large subunit from Cytophaga hutchinsonii (strain ATCC 33406 / DSM 1761 / CIP 103989 / NBRC 15051 / NCIMB 9469 / D465).